The sequence spans 583 residues: Nuclear distribution protein nudE homolog 1 (583 aa).

A coiled-coil region spans residues 14–195 (ATLEDTLGWY…QDKFKKQESR (182 aa)). 3 disordered regions span residues 34-68 (LAEF…KAET), 211-339 (TFDG…TSNS), and 358-583 (HSVR…GETY). A compositionally biased stretch (basic and acidic residues) spans 35–67 (AEFRDSSRELEQELEKDIERAEKQERHHQEKAE). Polar residues-rich tracts occupy residues 219–235 (PGST…TDSK), 279–319 (RSRL…TMRT), 329–339 (SASNKLPTSNS), 379–392 (NVYS…SITI), and 399–422 (SGSA…STPK). A compositionally biased stretch (low complexity) spans 453 to 469 (RPSSRASTSYATSYARP). The segment covering 529–538 (RRGTYSSQGG) has biased composition (polar residues).

This sequence belongs to the nudE family. As to quaternary structure, self-associates. Interacts with PAC1.

The protein localises to the cytoplasm. It is found in the cytoskeleton. Functionally, required for nuclear migration. In Gibberella zeae (strain ATCC MYA-4620 / CBS 123657 / FGSC 9075 / NRRL 31084 / PH-1) (Wheat head blight fungus), this protein is Nuclear distribution protein nudE homolog 1 (NDE1).